Consider the following 162-residue polypeptide: Large ribosomal subunit protein uL30 (162 aa).

This sequence belongs to the universal ribosomal protein uL30 family. Part of the 50S ribosomal subunit.

In Desulfurococcus amylolyticus (strain DSM 18924 / JCM 16383 / VKM B-2413 / 1221n) (Desulfurococcus kamchatkensis), this protein is Large ribosomal subunit protein uL30.